The chain runs to 82 residues: Small ribosomal subunit protein bS16 (82 aa).

The protein belongs to the bacterial ribosomal protein bS16 family.

The polypeptide is Small ribosomal subunit protein bS16 (Psychromonas ingrahamii (strain DSM 17664 / CCUG 51855 / 37)).